A 239-amino-acid polypeptide reads, in one-letter code: Ribonuclease PH (239 aa).

Residues Arg-86 and 124 to 126 contribute to the phosphate site; that span reads GTR.

Belongs to the RNase PH family. As to quaternary structure, homohexameric ring arranged as a trimer of dimers.

The catalysed reaction is tRNA(n+1) + phosphate = tRNA(n) + a ribonucleoside 5'-diphosphate. In terms of biological role, phosphorolytic 3'-5' exoribonuclease that plays an important role in tRNA 3'-end maturation. Removes nucleotide residues following the 3'-CCA terminus of tRNAs; can also add nucleotides to the ends of RNA molecules by using nucleoside diphosphates as substrates, but this may not be physiologically important. Probably plays a role in initiation of 16S rRNA degradation (leading to ribosome degradation) during starvation. In Sodalis glossinidius (strain morsitans), this protein is Ribonuclease PH.